The sequence spans 481 residues: MSTICPPPSPAVAKTEIALSGESPLLAATFAYWDNILGPRVRHIWAPKTDQVLLSDGEITFLANHTLNGEILRNAESGAIDVKFFVLSEKGVIIVSLIFDGNWNGDRSTYGLSIILPQTELSFYLPLHRVCVDRLTHIIRKGRIWMHKERQENVQKIVLEGTERMEDQGQSIIPMLTGEVIPVMELLASMKSHSVPEDIDIADTVLNDDDIGDSCHEGFLLNAISSHLQTCGCSVVVGSSAEKVNKIVRTLCLFLTPAERKCSRLCEAESSFKYESGLFVQGLLKDATGSFVLPFRQVMYAPYPTTHIDVDVNTVKQMPPCHEHIYNQRRYMRSELTAFWRATSEEDMAQDTIIYTDESFTPDLNIFQDVLHRDTLVKAFLDQVFHLKPGLSLRSTFLAQFLLILHRKALTLIKYIEDDTQKGKKPFKSLRNLKIDLDLTAEGDLNIIMALAEKIKPGLHSFIFGRPFYTSVQERDVLMTF.

Residues 23–194 (SPLLAATFAY…ELLASMKSHS (172 aa)) enclose the uDENN C9ORF72-type domain. The region spanning 200 to 343 (DIADTVLNDD…SELTAFWRAT (144 aa)) is the cDENN C9ORF72-type domain. Residues 370–464 (VLHRDTLVKA…IKPGLHSFIF (95 aa)) form the dDENN C9ORF72-type domain. The segment at 461–481 (SFIFGRPFYTSVQERDVLMTF) is required for the homodimerization of the C9orf72-SMCR8 complex.

As to quaternary structure, component of the C9orf72-SMCR8 complex, at least composed of C9orf72, SMCR8 and WDR41. The complex is formed of two protomers, each individually consisting of one molecule each of C9orf72, SMCR8 and WDR41. The protomers homodimerize via an interaction between C9orf72 (via C-terminus) and SMCR8 (via N-terminus). Within each protomer SMCR8 (via DENN domain) acts as a bridging protein between WDR41 (via C-terminus and N-terminus) and C9orf72 (via C-terminus). The C9orf72-SMCR8 complex associates with the ULK1/ATG1 kinase complex. Interacts with ULK1/ATG1 kinase complex members ULK1, ATG13 and RB1CC1. Interacts with SMCR8; the interaction is direct. Interacts with HNRNPA1, HNRNPA2B1 and UBQLN2. Interacts with small Rab GTPase RAB1A; the interaction mediates recruitment of RAB1A to the ULK1/ATG1 kinase complex. Also interacts with small Rab GTPase RAB7A. Interacts with cofilin. Interacts with GTP-binding proteins ARF1 and ARF6. Interacts with the DLG4/PSD-95. Interacts with CARM1 (via PH domain-like fold). Interacts with RAB39A and RAB39B (in GDP-bound forms); functions as GEF for RAB39A and RAB39B. In terms of tissue distribution, expressed in postnatal cerebellum and cortex (at protein level). Neuronal expression is detected in several regions of the adult brain and spinal cord. Prominent expression also observed in embryonic and early postnatal neurons including retinal ganglion cells, sensory neurons in the olfactory epithelium and in dorsal root ganglia, and spinal motor neurons. Expressed in the developing cerebral cortex, cerebellum, olfactory bulb, hippocampus and spinal cord in the embryo and in P0 cortical neurons and astrocytes. Also expressed in non-neuronal tissues such as kidney and tooth. In the spleen, highly expressed in myeloid cells compared to B cell and T cell populations where expression is much lower. In the brain, highly expressed in microglia. As to expression, expressed in the forebrain, including in the glomerular layer of the olfactory bulb (at protein level).

The protein localises to the nucleus. It localises to the cytoplasm. Its subcellular location is the P-body. It is found in the stress granule. The protein resides in the endosome. The protein localises to the lysosome. It localises to the cytoplasmic vesicle. Its subcellular location is the autophagosome. It is found in the autolysosome. The protein resides in the secreted. The protein localises to the cell projection. It localises to the axon. Its subcellular location is the growth cone. It is found in the perikaryon. The protein resides in the dendrite. The protein localises to the presynapse. It localises to the postsynapse. In terms of biological role, acts as a guanine-nucleotide releasing factor (GEF) for Rab GTPases by promoting the conversion of inactive RAB-GDP to the active form RAB-GTP. Acts as a GEF for RAB39A which enables HOPS-mediated autophagosome-lysosome membrane tethering and fusion in mammalian autophagy. Component of the C9orf72-SMCR8 complex where both subunits display GEF activity and that regulates autophagy. As part of the C9orf72-SMCR8-WDR41 (CSW) complex, functions as GEF for RAB8A, and RAB39B, thereby promoting autophagosome maturation. As part of the C9orf72-SMCR8 complex, also functions as GTPase activating protein (GAP) for RAB8A and RAB11A in vitro. The C9orf72-SMCR8 complex also acts as a regulator of autophagy initiation by interacting with the ULK1/ATG1 kinase complex and modulating its protein kinase activity. Promotes initiation of autophagy by regulating the RAB1A-dependent trafficking of the ULK1/ATG1 kinase complex to the phagophore which leads to autophagosome formation. Acts as a regulator of mTORC1 signaling by promoting phosphorylation of mTORC1 substrates. Plays a role in endosomal trafficking. May be involved in regulating the maturation of phagosomes to lysosomes. Promotes the lysosomal localization and lysosome-mediated degradation of CARM1 which leads to inhibition of starvation-induced lipid metabolism. Regulates actin dynamics in motor neurons by inhibiting the GTP-binding activity of ARF6, leading to ARF6 inactivation. This reduces the activity of the LIMK1 and LIMK2 kinases which are responsible for phosphorylation and inactivation of CFL1/cofilin, leading to cofilin activation. Positively regulates axon extension and axon growth cone size in spinal motor neurons. Required for SMCR8 protein expression and localization at pre- and post-synaptic compartments in the forebrain, also regulates protein abundance of RAB3A and GRIA1/GLUR1 in post-synaptic compartments in the forebrain and hippocampus. Plays a role within the hematopoietic system in restricting inflammation and the development of autoimmunity. The chain is Guanine nucleotide exchange factor C9orf72 homolog from Mus musculus (Mouse).